A 303-amino-acid chain; its full sequence is Probable endonuclease 4 (303 aa).

Zn(2+)-binding residues include His-78, His-118, Glu-154, Asp-188, His-191, His-222, Asp-235, His-237, and Glu-267.

It belongs to the AP endonuclease 2 family. Zn(2+) serves as cofactor.

It carries out the reaction Endonucleolytic cleavage to 5'-phosphooligonucleotide end-products.. Endonuclease IV plays a role in DNA repair. It cleaves phosphodiester bonds at apurinic or apyrimidinic (AP) sites, generating a 3'-hydroxyl group and a 5'-terminal sugar phosphate. The protein is Probable endonuclease 4 of Mycoplasmoides gallisepticum (strain R(low / passage 15 / clone 2)) (Mycoplasma gallisepticum).